Reading from the N-terminus, the 312-residue chain is tRNA dimethylallyltransferase (312 aa).

Residue 13-20 (GPTAAGKT) coordinates ATP. 15–20 (TAAGKT) contributes to the substrate binding site. Interaction with substrate tRNA stretches follow at residues 38-41 (DSAM), 162-166 (QRLLR), and 244-249 (RCVGYR).

The protein belongs to the IPP transferase family. Monomer. Requires Mg(2+) as cofactor.

The catalysed reaction is adenosine(37) in tRNA + dimethylallyl diphosphate = N(6)-dimethylallyladenosine(37) in tRNA + diphosphate. Its function is as follows. Catalyzes the transfer of a dimethylallyl group onto the adenine at position 37 in tRNAs that read codons beginning with uridine, leading to the formation of N6-(dimethylallyl)adenosine (i(6)A). This Chromohalobacter salexigens (strain ATCC BAA-138 / DSM 3043 / CIP 106854 / NCIMB 13768 / 1H11) protein is tRNA dimethylallyltransferase.